The following is a 323-amino-acid chain: Beta-ketoacyl-[acyl-carrier-protein] synthase III (323 aa).

Residues Cys-114 and His-250 contribute to the active site. The interval 251-255 (QANRR) is ACP-binding. Asn-280 is a catalytic residue.

This sequence belongs to the thiolase-like superfamily. FabH family. As to quaternary structure, homodimer.

The protein resides in the cytoplasm. It catalyses the reaction malonyl-[ACP] + acetyl-CoA + H(+) = 3-oxobutanoyl-[ACP] + CO2 + CoA. Its pathway is lipid metabolism; fatty acid biosynthesis. Catalyzes the condensation reaction of fatty acid synthesis by the addition to an acyl acceptor of two carbons from malonyl-ACP. Catalyzes the first condensation reaction which initiates fatty acid synthesis and may therefore play a role in governing the total rate of fatty acid production. Possesses both acetoacetyl-ACP synthase and acetyl transacylase activities. Its substrate specificity determines the biosynthesis of branched-chain and/or straight-chain of fatty acids. This chain is Beta-ketoacyl-[acyl-carrier-protein] synthase III, found in Rhodospirillum centenum (strain ATCC 51521 / SW).